The following is a 49-amino-acid chain: Large ribosomal subunit protein bL33B (49 aa).

This sequence belongs to the bacterial ribosomal protein bL33 family.

In Bacillus licheniformis, this protein is Large ribosomal subunit protein bL33B (rpmGB).